The following is a 266-amino-acid chain: MLRFLVFASLVLCGHSTEDVPETDARVVGGAEARRNSWPSQISLQYQYGGSWHHTCGGTLIRSNWVMTAAHCVDSPMTYRVVVGEHNLSQNDGTEQYVNVQKIVSHPYWNKNNVVAGYDIALLRLAKSVTLNNYVQLGVLPREGTILANNSPCYITGWGRTRTNGELAQTLQQAYLPSVSYSICSSSSYWGSSVKNTMVCAGGDGVRSGCQGDSGGPLHCMVNGQYAVHGVTSFVSSMGCNVARKPTVFTRVSAYISWMNNVIASN.

An N-terminal signal peptide occupies residues 1–16 (MLRFLVFASLVLCGHS). Positions 17 to 26 (TEDVPETDAR) are cleaved as a propeptide — activation peptide. The Peptidase S1 domain maps to 27–264 (VVGGAEARRN…YISWMNNVIA (238 aa)). An intrachain disulfide couples Cys56 to Cys72. His71 acts as the Charge relay system in catalysis. Ca(2+) contacts are provided by Glu85, Asn87, Gln90, and Glu95. Asn87 is a glycosylation site (N-linked (GlcNAc...) asparagine). The Charge relay system role is filled by Asp119. 3 disulfide bridges follow: Cys153–Cys220, Cys184–Cys200, and Cys210–Cys240. The active-site Charge relay system is Ser214.

The protein belongs to the peptidase S1 family. Elastase subfamily. Requires Ca(2+) as cofactor.

It is found in the secreted. The enzyme catalyses Hydrolysis of proteins, including elastin. Preferential cleavage: Ala-|-Xaa.. Serine proteases that hydrolyze many proteins in addition to elastin. The polypeptide is Chymotrypsin-like elastase family member 1 (Cela1) (Mus musculus (Mouse)).